The sequence spans 286 residues: Sulfate transport system permease protein CysW (286 aa).

The next 6 membrane-spanning stretches (helical) occupy residues 20-40 (LLPL…IIIP), 74-94 (LMGV…AFAI), 108-128 (VIDL…VLLY), 145-165 (IIFA…PFVA), 207-227 (LYGV…VSVV), and 255-275 (YTAA…KALL). Residues 69-272 (IRLTLLMGVI…GISLVTLVLK (204 aa)) enclose the ABC transmembrane type-1 domain.

It belongs to the binding-protein-dependent transport system permease family. CysTW subfamily. The complex is composed of two ATP-binding proteins (CysA), two transmembrane proteins (CysT and CysW) and a solute-binding protein (CysP).

The protein localises to the cell inner membrane. Its function is as follows. Part of the ABC transporter complex CysAWTP (TC 3.A.1.6.1) involved in sulfate/thiosulfate import. Probably responsible for the translocation of the substrate across the membrane. This is Sulfate transport system permease protein CysW (cysW) from Synechococcus elongatus (strain ATCC 33912 / PCC 7942 / FACHB-805) (Anacystis nidulans R2).